The sequence spans 345 residues: Fe-S cluster assembly protein DRE2 (345 aa).

Residues phenylalanine 11–serine 166 form an N-terminal SAM-like domain region. A disordered region spans residues serine 147–serine 166. Over residues serine 153 to serine 166 the composition is skewed to low complexity. Residues alanine 167–valine 210 form a linker region. Positions 220, 233, 236, and 238 each coordinate [2Fe-2S] cluster. Residues cysteine 220 to cysteine 238 are fe-S binding site A. [4Fe-4S] cluster contacts are provided by cysteine 307, cysteine 310, cysteine 318, and cysteine 321. Short sequence motifs (cx2C motif) lie at residues cysteine 307–cysteine 310 and cysteine 318–cysteine 321. Positions cysteine 307 to cysteine 321 are fe-S binding site B.

It belongs to the anamorsin family. In terms of assembly, monomer. Interacts with TAH18. Interacts with MIA40. The cofactor is [2Fe-2S] cluster. [4Fe-4S] cluster is required as a cofactor.

The protein localises to the cytoplasm. The protein resides in the mitochondrion intermembrane space. Functionally, component of the cytosolic iron-sulfur (Fe-S) protein assembly (CIA) machinery required for the maturation of extramitochondrial Fe-S proteins. Part of an electron transfer chain functioning in an early step of cytosolic Fe-S biogenesis, facilitating the de novo assembly of a [4Fe-4S] cluster on the scaffold complex CFD1-NBP35. Electrons are transferred to DRE2 from NADPH via the FAD- and FMN-containing protein TAH18. TAH18-DRE2 are also required for the assembly of the diferric tyrosyl radical cofactor of ribonucleotide reductase (RNR), probably by providing electrons for reduction during radical cofactor maturation in the catalytic small subunit RNR2. This is Fe-S cluster assembly protein DRE2 from Mycosarcoma maydis (Corn smut fungus).